Reading from the N-terminus, the 330-residue chain is Beta-ketoacyl-[acyl-carrier-protein] synthase III (330 aa).

Active-site residues include Cys-118 and His-257. The interval Gln-258–Arg-262 is ACP-binding. Asn-287 is an active-site residue.

It belongs to the thiolase-like superfamily. FabH family. Homodimer.

The protein resides in the cytoplasm. The enzyme catalyses malonyl-[ACP] + acetyl-CoA + H(+) = 3-oxobutanoyl-[ACP] + CO2 + CoA. It functions in the pathway lipid metabolism; fatty acid biosynthesis. Catalyzes the condensation reaction of fatty acid synthesis by the addition to an acyl acceptor of two carbons from malonyl-ACP. Catalyzes the first condensation reaction which initiates fatty acid synthesis and may therefore play a role in governing the total rate of fatty acid production. Possesses both acetoacetyl-ACP synthase and acetyl transacylase activities. Its substrate specificity determines the biosynthesis of branched-chain and/or straight-chain of fatty acids. The sequence is that of Beta-ketoacyl-[acyl-carrier-protein] synthase III from Nitratidesulfovibrio vulgaris (strain DSM 19637 / Miyazaki F) (Desulfovibrio vulgaris).